Consider the following 203-residue polypeptide: Thymidylate kinase (203 aa).

10–17 provides a ligand contact to ATP; that stretch reads GIDGCGKT.

It belongs to the thymidylate kinase family.

It catalyses the reaction dTMP + ATP = dTDP + ADP. Its function is as follows. Phosphorylation of dTMP to form dTDP in both de novo and salvage pathways of dTTP synthesis. In Thermoanaerobacter pseudethanolicus (strain ATCC 33223 / 39E) (Clostridium thermohydrosulfuricum), this protein is Thymidylate kinase.